A 513-amino-acid chain; its full sequence is MSSDPGYQAPVVTVSSSIPRRGVGDSVLIVPVVTRDDAAAVLAAAPFLDKDAVREIEAALKSLGATGGEGQTHRLVVSALPVASVLTIGLGKERDEWPADTVRRVAGNAARSLDKVAAVLTTLSALDLEAAIEGLILGSYRFTEFRSAKTAPKDGGLRAITALSQESKSRARDAAQRATDIATAVATARDFVNTPPSHLYPDEFAKRAKALGEAAGLEVEILDDKALVKAGYGGIVGVGKGSSRPPRLVRLSHKGAVRTRTRGARPGGSKRVALVGKGITFDTGGISIKPAANMHHMTSDMGGAAAVIATVVLAAKQKLPIDVIATVPMAENMPSATAQRPGDVLTQYGGTTVEVLNTDAEGRLILADAIVRACEDNPDYLIETSTLTGAQTVALGSRTPGVMGSDAFRDRVATLSQQVGENAWAMPLPEELKDDLKSTVADLANVSGSRFAGMLVAGTYLREFVADGVEWAHIDVAAPAYNSGGPWGYTPKGGTGVPTRTMFAVLEEIAREG.

Residues K277 and D282 each coordinate Mn(2+). K289 is an active-site residue. 3 residues coordinate Mn(2+): D300, D359, and E361. R363 is a catalytic residue.

Belongs to the peptidase M17 family. Requires Mn(2+) as cofactor.

The protein resides in the cytoplasm. It carries out the reaction Release of an N-terminal amino acid, Xaa-|-Yaa-, in which Xaa is preferably Leu, but may be other amino acids including Pro although not Arg or Lys, and Yaa may be Pro. Amino acid amides and methyl esters are also readily hydrolyzed, but rates on arylamides are exceedingly low.. The catalysed reaction is Release of an N-terminal amino acid, preferentially leucine, but not glutamic or aspartic acids.. Functionally, presumably involved in the processing and regular turnover of intracellular proteins. Catalyzes the removal of unsubstituted N-terminal amino acids from various peptides. This Mycobacterium sp. (strain KMS) protein is Probable cytosol aminopeptidase.